The sequence spans 932 residues: 2-oxoglutarate dehydrogenase E1 component (932 aa).

The protein belongs to the alpha-ketoglutarate dehydrogenase family. Homodimer. Part of the 2-oxoglutarate dehydrogenase (OGDH) complex composed of E1 (2-oxoglutarate dehydrogenase), E2 (dihydrolipoamide succinyltransferase) and E3 (dihydrolipoamide dehydrogenase); the complex contains multiple copies of the three enzymatic components (E1, E2 and E3). Requires thiamine diphosphate as cofactor.

It catalyses the reaction N(6)-[(R)-lipoyl]-L-lysyl-[protein] + 2-oxoglutarate + H(+) = N(6)-[(R)-S(8)-succinyldihydrolipoyl]-L-lysyl-[protein] + CO2. Its function is as follows. E1 component of the 2-oxoglutarate dehydrogenase (OGDH) complex which catalyzes the decarboxylation of 2-oxoglutarate, the first step in the conversion of 2-oxoglutarate to succinyl-CoA and CO(2). This is 2-oxoglutarate dehydrogenase E1 component from Staphylococcus aureus (strain MRSA252).